Here is a 195-residue protein sequence, read N- to C-terminus: Imidazoleglycerol-phosphate dehydratase (195 aa).

The protein belongs to the imidazoleglycerol-phosphate dehydratase family.

The protein resides in the cytoplasm. It catalyses the reaction D-erythro-1-(imidazol-4-yl)glycerol 3-phosphate = 3-(imidazol-4-yl)-2-oxopropyl phosphate + H2O. The protein operates within amino-acid biosynthesis; L-histidine biosynthesis; L-histidine from 5-phospho-alpha-D-ribose 1-diphosphate: step 6/9. In Thermotoga petrophila (strain ATCC BAA-488 / DSM 13995 / JCM 10881 / RKU-1), this protein is Imidazoleglycerol-phosphate dehydratase.